Reading from the N-terminus, the 305-residue chain is Spermatogenesis-associated protein 4 (305 aa).

Residues Ser49–Arg155 enclose the Calponin-homology (CH) domain.

It is found in the nucleus. Its function is as follows. May play a role in apoptosis regulation. In Pan troglodytes (Chimpanzee), this protein is Spermatogenesis-associated protein 4 (SPATA4).